Consider the following 647-residue polypeptide: tRNA uridine 5-carboxymethylaminomethyl modification enzyme MnmG (647 aa).

FAD is bound by residues 22–27 (GAGHAG), V134, and S189. Residue 283 to 297 (GARYCPSIEDKIMRF) coordinates NAD(+). Q380 lines the FAD pocket.

Belongs to the MnmG family. In terms of assembly, homodimer. Heterotetramer of two MnmE and two MnmG subunits. It depends on FAD as a cofactor.

The protein resides in the cytoplasm. NAD-binding protein involved in the addition of a carboxymethylaminomethyl (cmnm) group at the wobble position (U34) of certain tRNAs, forming tRNA-cmnm(5)s(2)U34. The protein is tRNA uridine 5-carboxymethylaminomethyl modification enzyme MnmG of Desulfotalea psychrophila (strain LSv54 / DSM 12343).